The chain runs to 613 residues: Protein translocase subunit SecD (613 aa).

Transmembrane regions (helical) follow at residues 10–30 (ALVV…WFYF), 452–472 (KGTL…VVYY), 477–497 (LVAD…MSMI), 503–523 (LPGI…NVLI), 548–568 (VFWT…VLFQ), and 576–596 (GFAV…IVVT).

The protein belongs to the SecD/SecF family. SecD subfamily. In terms of assembly, forms a complex with SecF. Part of the essential Sec protein translocation apparatus which comprises SecA, SecYEG and auxiliary proteins SecDF-YajC and YidC.

The protein localises to the cell inner membrane. Its function is as follows. Part of the Sec protein translocase complex. Interacts with the SecYEG preprotein conducting channel. SecDF uses the proton motive force (PMF) to complete protein translocation after the ATP-dependent function of SecA. This is Protein translocase subunit SecD from Anaeromyxobacter dehalogenans (strain 2CP-C).